The primary structure comprises 88 residues: uncharacterized protein (88 aa).

The N-terminal stretch at 1-25 (MRAAFWVGCAALLLSACSSEPVQQA) is a signal peptide.

This is an uncharacterized protein from Escherichia coli O6:H1 (strain CFT073 / ATCC 700928 / UPEC).